We begin with the raw amino-acid sequence, 879 residues long: Protein translocase subunit SecA (879 aa).

ATP contacts are provided by residues Gln87, 105 to 109 (GEGKT), and Asp509. Residues 834 to 879 (IAEDSEKLKPITGTKKPKRNDPCPCGSGKKYKNCCGQSGPKKGLLA) form a disordered region. Positions 856, 858, 867, and 868 each coordinate Zn(2+).

The protein belongs to the SecA family. In terms of assembly, monomer and homodimer. Part of the essential Sec protein translocation apparatus which comprises SecA, SecYEG and auxiliary proteins SecDF-YajC and YidC. It depends on Zn(2+) as a cofactor.

The protein localises to the cell inner membrane. Its subcellular location is the cytoplasm. The catalysed reaction is ATP + H2O + cellular proteinSide 1 = ADP + phosphate + cellular proteinSide 2.. Part of the Sec protein translocase complex. Interacts with the SecYEG preprotein conducting channel. Has a central role in coupling the hydrolysis of ATP to the transfer of proteins into and across the cell membrane, serving as an ATP-driven molecular motor driving the stepwise translocation of polypeptide chains across the membrane. This is Protein translocase subunit SecA from Sulfurovum sp. (strain NBC37-1).